Reading from the N-terminus, the 483-residue chain is Glutamate--tRNA ligase (483 aa).

The 'HIGH' region signature appears at 9 to 19; that stretch reads PSPTGYLHIGN. The 'KMSKS' region motif lies at 250-254; the sequence is KLSKR. Lys253 contacts ATP.

It belongs to the class-I aminoacyl-tRNA synthetase family. Glutamate--tRNA ligase type 1 subfamily. As to quaternary structure, monomer.

The protein resides in the cytoplasm. The catalysed reaction is tRNA(Glu) + L-glutamate + ATP = L-glutamyl-tRNA(Glu) + AMP + diphosphate. Catalyzes the attachment of glutamate to tRNA(Glu) in a two-step reaction: glutamate is first activated by ATP to form Glu-AMP and then transferred to the acceptor end of tRNA(Glu). In Blochmanniella floridana, this protein is Glutamate--tRNA ligase.